The primary structure comprises 133 residues: Fluoride-specific ion channel FluC (133 aa).

4 helical membrane passes run 12 to 32 (LAMTGGALGSGLRFAIGASLI), 41 to 61 (WGTLTVNLLGSFVAGVLLVWL), 76 to 96 (IVGVIGGLTTFSSLMMECLVF), and 104 to 124 (MIGIYLAVTLLAGLALVFAGA). Na(+) contacts are provided by Gly-81 and Thr-84.

The protein belongs to the fluoride channel Fluc/FEX (TC 1.A.43) family.

Its subcellular location is the cell inner membrane. The catalysed reaction is fluoride(in) = fluoride(out). Its activity is regulated as follows. Na(+) is not transported, but it plays an essential structural role and its presence is essential for fluoride channel function. Functionally, fluoride-specific ion channel. Important for reducing fluoride concentration in the cell, thus reducing its toxicity. This is Fluoride-specific ion channel FluC from Xanthomonas axonopodis pv. citri (strain 306).